A 345-amino-acid polypeptide reads, in one-letter code: ATP-dependent kinase YFH7 (345 aa).

31–39 (GPPGSGKST) contributes to the ATP binding site.

Belongs to the YFH7 family.

In terms of biological role, ATP-dependent kinase that could be involved in endoplasmic reticulum membrane assembly. This Candida glabrata (strain ATCC 2001 / BCRC 20586 / JCM 3761 / NBRC 0622 / NRRL Y-65 / CBS 138) (Yeast) protein is ATP-dependent kinase YFH7 (YFH7).